A 294-amino-acid chain; its full sequence is Cytidine deaminase (294 aa).

CMP/dCMP-type deaminase domains lie at 48 to 168 and 186 to 294; these read DEDA…FGPK and LEGD…VLLG. Residue 89-91 participates in substrate binding; that stretch reads NME. Histidine 102 provides a ligand contact to Zn(2+). The active-site Proton donor is the glutamate 104. Cysteine 129 and cysteine 132 together coordinate Zn(2+).

The protein belongs to the cytidine and deoxycytidylate deaminase family. In terms of assembly, homodimer. Zn(2+) serves as cofactor.

The catalysed reaction is cytidine + H2O + H(+) = uridine + NH4(+). It catalyses the reaction 2'-deoxycytidine + H2O + H(+) = 2'-deoxyuridine + NH4(+). Functionally, this enzyme scavenges exogenous and endogenous cytidine and 2'-deoxycytidine for UMP synthesis. The chain is Cytidine deaminase from Citrobacter koseri (strain ATCC BAA-895 / CDC 4225-83 / SGSC4696).